The sequence spans 383 residues: D-alanine--D-alanine ligase (383 aa).

The region spanning 169–373 (KALLRAAGLP…YPQLVDRLVR (205 aa)) is the ATP-grasp domain. 196-251 (QERLGLPVFVKPARGGSSIGISRVEAWADLDTAIKAARASDPKVLVESAIVGREIE) is an ATP binding site. Mg(2+)-binding residues include D327, E340, and N342.

The protein belongs to the D-alanine--D-alanine ligase family. The cofactor is Mg(2+). It depends on Mn(2+) as a cofactor.

It is found in the cytoplasm. The catalysed reaction is 2 D-alanine + ATP = D-alanyl-D-alanine + ADP + phosphate + H(+). Its pathway is cell wall biogenesis; peptidoglycan biosynthesis. In terms of biological role, cell wall formation. The chain is D-alanine--D-alanine ligase from Frankia casuarinae (strain DSM 45818 / CECT 9043 / HFP020203 / CcI3).